A 328-amino-acid polypeptide reads, in one-letter code: 7,8-didemethyl-8-hydroxy-5-deazariboflavin synthase (328 aa).

The Radical SAM core domain maps to 1–242 (MTYSRNIFIP…PDVSIQVPPN (242 aa)). [4Fe-4S] cluster-binding residues include Cys-15, Cys-19, and Cys-22.

Belongs to the radical SAM superfamily. CofG family. In terms of assembly, consists of two subunits, CofG and CofH. [4Fe-4S] cluster serves as cofactor.

The enzyme catalyses 5-amino-5-(4-hydroxybenzyl)-6-(D-ribitylimino)-5,6-dihydrouracil + S-adenosyl-L-methionine = 7,8-didemethyl-8-hydroxy-5-deazariboflavin + 5'-deoxyadenosine + L-methionine + NH4(+) + H(+). The protein operates within cofactor biosynthesis; coenzyme F0 biosynthesis. Functionally, catalyzes the radical-mediated synthesis of 7,8-didemethyl-8-hydroxy-5-deazariboflavin from 5-amino-5-(4-hydroxybenzyl)-6-(D-ribitylimino)-5,6-dihydrouracil. The chain is 7,8-didemethyl-8-hydroxy-5-deazariboflavin synthase from Methanothermobacter thermautotrophicus (strain ATCC 29096 / DSM 1053 / JCM 10044 / NBRC 100330 / Delta H) (Methanobacterium thermoautotrophicum).